A 1047-amino-acid polypeptide reads, in one-letter code: Ubiquitin carboxyl-terminal hydrolase 48 (1047 aa).

The USP domain maps to valine 89–glutamine 416. Cysteine 98 acts as the Nucleophile in catalysis. The active-site Proton acceptor is the histidine 348. DUSP domains follow at residues glutamine 457–leucine 551, asparagine 567–proline 697, and methionine 717–aspartate 830. The tract at residues leucine 609–glutamate 647 is disordered. Polar residues predominate over residues serine 621–glycine 631. Over residues aspartate 635–glutamate 647 the composition is skewed to basic and acidic residues. The disordered stretch occupies residues proline 887–threonine 928. Residues glutamate 901–aspartate 912 show a composition bias toward basic and acidic residues. One can recognise a Ubiquitin-like domain in the interval valine 961–isoleucine 1012.

It belongs to the peptidase C19 family.

The protein localises to the cytoplasm. The protein resides in the nucleus. It catalyses the reaction Thiol-dependent hydrolysis of ester, thioester, amide, peptide and isopeptide bonds formed by the C-terminal Gly of ubiquitin (a 76-residue protein attached to proteins as an intracellular targeting signal).. In terms of biological role, recognizes and hydrolyzes the peptide bond at the C-terminal Gly of ubiquitin. Involved in the processing of poly-ubiquitin precursors as well as that of ubiquitinated proteins. This chain is Ubiquitin carboxyl-terminal hydrolase 48 (usp48), found in Danio rerio (Zebrafish).